The primary structure comprises 550 residues: Dihydroxy-acid dehydratase (550 aa).

Position 78 (Asp78) interacts with Mg(2+). Cys119 contacts [2Fe-2S] cluster. Asp120 and Lys121 together coordinate Mg(2+). Lys121 is subject to N6-carboxylysine. Position 191 (Cys191) interacts with [2Fe-2S] cluster. Glu440 contacts Mg(2+). The Proton acceptor role is filled by Ser466.

Belongs to the IlvD/Edd family. Homodimer. Requires [2Fe-2S] cluster as cofactor. The cofactor is Mg(2+).

The enzyme catalyses (2R)-2,3-dihydroxy-3-methylbutanoate = 3-methyl-2-oxobutanoate + H2O. It carries out the reaction (2R,3R)-2,3-dihydroxy-3-methylpentanoate = (S)-3-methyl-2-oxopentanoate + H2O. Its pathway is amino-acid biosynthesis; L-isoleucine biosynthesis; L-isoleucine from 2-oxobutanoate: step 3/4. The protein operates within amino-acid biosynthesis; L-valine biosynthesis; L-valine from pyruvate: step 3/4. Functionally, functions in the biosynthesis of branched-chain amino acids. Catalyzes the dehydration of (2R,3R)-2,3-dihydroxy-3-methylpentanoate (2,3-dihydroxy-3-methylvalerate) into 2-oxo-3-methylpentanoate (2-oxo-3-methylvalerate) and of (2R)-2,3-dihydroxy-3-methylbutanoate (2,3-dihydroxyisovalerate) into 2-oxo-3-methylbutanoate (2-oxoisovalerate), the penultimate precursor to L-isoleucine and L-valine, respectively. The polypeptide is Dihydroxy-acid dehydratase (Methanococcus maripaludis (strain C7 / ATCC BAA-1331)).